The sequence spans 290 residues: Metallo-beta-lactamase L1 type 3 (290 aa).

The N-terminal stretch at 1–21 (MRSTLLAFALAVALPAAHTSA) is a signal peptide. Residues 22–33 (AEVPLPQLRAYT) constitute a propeptide that is removed on maturation. Residues His-105, His-107, Asp-109, His-110, and His-181 each coordinate Zn(2+). Residue Asp-205 coordinates substrate. Cys-239 and Cys-267 form a disulfide bridge. Zn(2+) is bound at residue His-246.

The protein belongs to the metallo-beta-lactamase superfamily. Class-B beta-lactamase family. Homotetramer. It depends on Zn(2+) as a cofactor.

Its subcellular location is the periplasm. The enzyme catalyses a beta-lactam + H2O = a substituted beta-amino acid. Inhibited by Hg(2+) or Cu(2+), and by chelating agents such as EDTA and O-phenanthroline. Reduced enzymatic activity in presence of cobalt, nickel, cadmium, and manganese. Functionally, confers resistance to the different beta-lactams antibiotics (penicillin, cephalosporin and carbapenem) via the hydrolysis of the beta-lactam ring. This chain is Metallo-beta-lactamase L1 type 3, found in Stenotrophomonas maltophilia (Pseudomonas maltophilia).